The following is a 367-amino-acid chain: 3-isopropylmalate dehydrogenase (367 aa).

An NAD(+)-binding site is contributed by 77–90 (GPKYDDLDFSVKPE). Substrate is bound by residues arginine 97, arginine 107, arginine 135, and aspartate 224. Residues aspartate 224, aspartate 248, and aspartate 252 each contribute to the Mg(2+) site. 287-299 (GSAPDIAGQGKAN) is a binding site for NAD(+).

Belongs to the isocitrate and isopropylmalate dehydrogenases family. LeuB type 1 subfamily. As to quaternary structure, homodimer. Mg(2+) is required as a cofactor. It depends on Mn(2+) as a cofactor.

It localises to the cytoplasm. It catalyses the reaction (2R,3S)-3-isopropylmalate + NAD(+) = 4-methyl-2-oxopentanoate + CO2 + NADH. The protein operates within amino-acid biosynthesis; L-leucine biosynthesis; L-leucine from 3-methyl-2-oxobutanoate: step 3/4. In terms of biological role, catalyzes the oxidation of 3-carboxy-2-hydroxy-4-methylpentanoate (3-isopropylmalate) to 3-carboxy-4-methyl-2-oxopentanoate. The product decarboxylates to 4-methyl-2 oxopentanoate. This chain is 3-isopropylmalate dehydrogenase, found in Ruegeria pomeroyi (strain ATCC 700808 / DSM 15171 / DSS-3) (Silicibacter pomeroyi).